The chain runs to 249 residues: MKKSIIIPALDLIDGNVVRLHQGDYAKQTTYSDNPIEQFASYLAQGAEQLHLVDLTGAKDPAKRQTALIGKIIAATHCKIQVGGGIRTEKDVADLLAVGANRVVIGSTAVKERAMVKEWFNKYGAEKFVLALDVNIDASGQKIIAISGWQEASGVSLEELIEDFQSVGLQHVLCTDISRDGTLAGSNVDLYKEICAKYPAVNFQSSGGIGSLEDIKALKGTGVAGVIVGRALLEGKFNVAEAIECWQNG.

Aspartate 11 acts as the Proton acceptor in catalysis. Aspartate 133 serves as the catalytic Proton donor.

This sequence belongs to the HisA/HisF family.

It localises to the cytoplasm. It carries out the reaction 1-(5-phospho-beta-D-ribosyl)-5-[(5-phospho-beta-D-ribosylamino)methylideneamino]imidazole-4-carboxamide = 5-[(5-phospho-1-deoxy-D-ribulos-1-ylimino)methylamino]-1-(5-phospho-beta-D-ribosyl)imidazole-4-carboxamide. It functions in the pathway amino-acid biosynthesis; L-histidine biosynthesis; L-histidine from 5-phospho-alpha-D-ribose 1-diphosphate: step 4/9. The chain is 1-(5-phosphoribosyl)-5-[(5-phosphoribosylamino)methylideneamino] imidazole-4-carboxamide isomerase from Mannheimia succiniciproducens (strain KCTC 0769BP / MBEL55E).